The sequence spans 507 residues: Natural resistance-associated macrophage protein 1 (507 aa).

The interval 1–36 is disordered; that stretch reads MIRDKNPQRVNRPSYGSISSLPSPAPQPEPSRNTYL. Residues 1–39 are Cytoplasmic-facing; that stretch reads MIRDKNPQRVNRPSYGSISSLPSPAPQPEPSRNTYLSEK. The segment covering 8–22 has biased composition (polar residues); it reads QRVNRPSYGSISSLP. Residues 40-60 form a helical membrane-spanning segment; the sequence is IPIPSTEQLLWVLLWATVLGL. Residues 61-123 lie on the Extracellular side of the membrane; sequence LCQRLAARLG…ISFNLLSAGR (63 aa). A helical membrane pass occupies residues 124–144; sequence IPLWGGVLITIVDTFFFLFLD. At 145 to 152 the chain is on the cytoplasmic side; the sequence is NYGLRKLE. The chain crosses the membrane as a helical span at residues 153 to 173; the sequence is AFFGFLVTIMALTFGYEYVVA. Over 174 to 199 the chain is Extracellular; it reads RPSQGALLKGLFLPSCPGCGQPELLQ. A helical transmembrane segment spans residues 200-220; the sequence is AVGIVGAIIMPHNIYLHSALV. Residues 221–245 lie on the Cytoplasmic side of the membrane; sequence KSREVDRTRRGDVREANMYFLTEAT. Residues 246–266 traverse the membrane as a helical segment; the sequence is IALFVSFIINLFVMAVFGQAF. Topologically, residues 267 to 305 are extracellular; that stretch reads YQQTNEEAFNICANSSLHNYAKIFPRDNNTVSVDIYQGG. N-linked (GlcNAc...) asparagine glycans are attached at residues Asn280 and Asn294. Residues 306-326 traverse the membrane as a helical segment; it reads VILGCLFGPAALYIWAVGLLA. The Cytoplasmic portion of the chain corresponds to 327–353; it reads AGQSSTMTGTYAGQFVMEGFLKLRWSR. A helical transmembrane segment spans residues 354-374; the sequence is FARVLLTRSCAILPTVLVAVF. Residues 375 to 391 lie on the Extracellular side of the membrane; it reads RDLRDLSGLNDLLNVLQ. Residues 392 to 412 traverse the membrane as a helical segment; sequence SLLLPFAVLPILTFTSMPAVM. Topologically, residues 413 to 422 are cytoplasmic; it reads QEFANGWLSK. The helical transmembrane segment at 423–443 threads the bilayer; it reads VITSCIMALVCAINLYFVISY. Topologically, residues 444-451 are extracellular; it reads LPSLPHPA. A helical transmembrane segment spans residues 452–472; that stretch reads YFGLVALLAIGYLGLTAYLAW. Topologically, residues 473-507 are cytoplasmic; it reads TCCIAHGAKFLTHSSHQRFLYGLPIEEQEGREGSG.

The protein belongs to the NRAMP family.

It is found in the late endosome membrane. It localises to the lysosome membrane. The catalysed reaction is Zn(2+)(in) + H(+)(out) = Zn(2+)(out) + H(+)(in). The enzyme catalyses Fe(2+)(in) + H(+)(out) = Fe(2+)(out) + H(+)(in). It carries out the reaction Mn(2+)(in) + H(+)(out) = Mn(2+)(out) + H(+)(in). Macrophage-specific antiporter that fluxes metal ions in either direction against a proton gradient. Localized to late endosomal lysosomal membranes, delivers bivalent cations from the cytosol into these acidic compartments where they may directly affect antimicrobial activity. Involved in iron metabolism and host natural resistance to infection with intracellular parasites. Pathogen resistance involves sequestration of Fe(2+) and Mn(2+), cofactors of both prokaryotic and eukaryotic catalases and superoxide dismutases, not only to protect the macrophage against its own generation of reactive oxygen species, but to deny the cations to the pathogen for synthesis of its protective enzymes. The polypeptide is Natural resistance-associated macrophage protein 1 (Slc11a1) (Rattus norvegicus (Rat)).